The following is a 108-amino-acid chain: Nucleoid-associated protein Csal_1459 (108 aa).

A compositionally biased stretch (basic and acidic residues) spans 84–93; it reads EETSRGRMEE. A disordered region spans residues 84-108; sequence EETSRGRMEEATEGMNLPPGFKMPF.

The protein belongs to the YbaB/EbfC family. In terms of assembly, homodimer.

Its subcellular location is the cytoplasm. The protein localises to the nucleoid. In terms of biological role, binds to DNA and alters its conformation. May be involved in regulation of gene expression, nucleoid organization and DNA protection. This is Nucleoid-associated protein Csal_1459 from Chromohalobacter salexigens (strain ATCC BAA-138 / DSM 3043 / CIP 106854 / NCIMB 13768 / 1H11).